A 1521-amino-acid chain; its full sequence is Protein OPAQUE1 (1521 aa).

The Myosin N-terminal SH3-like domain occupies 4-53 (RKGLKVWVEEKGEGWVEAEVVEAKERAVVVFSSQRKKITVSPEKLLPRDT). Positions 60–731 (GHVDDMTKLT…QIAILDMRRA (672 aa)) constitute a Myosin motor domain. Residues 155–162 (GESGAGKT) and 208–216 (NDNSSRFGK) each bind ATP. Actin-binding regions lie at residues 493–527 (LIEKKPIGIIALLDEACMFPKSTHETFATKMFRNF), 529–552 (SHLRLERTKFSETDFTISHYAGKV), 587–612 (FTSLPEESIRSSYKFSSVASRFKLQL), and 612–634 (LQALMETLNSTEPHYVRCVKPNS). IQ domains are found at residues 733–755 (ILDNAARHIQGRFRTFITRKEFV), 756–778 (KTREASISIQAYCRGCLARKMFA), 781–803 (RETAAAVIVQKYVRRWLLRRAHL), 804–826 (QACLAALLIQSYIRGFIARRYFS), 829–851 (REHKAATVIQSTWRRRKFVILFQ), and 852–874 (NYRQATVAIQCSWRQKLARKELR). Coiled coils occupy residues 870–910 (RKEL…ERRL) and 974–1050 (SAEA…LRQK). One can recognise a Dilute domain in the interval 1162–1459 (DHVIEAINDV…VAAMREMVNK (298 aa)).

The protein belongs to the TRAFAC class myosin-kinesin ATPase superfamily. Myosin family. Plant myosin class XI subfamily. As to quaternary structure, interacts (via C-terminus) with HIP (via C-terminus), but not with zeins, FL1 or intrinsic proteins of protein bodies. In terms of tissue distribution, high expression in kernels and stems, intermediate in ears and leaves, and low in roots, silks and tassels.

The protein resides in the cytoplasm. Its function is as follows. Myosin XI motor protein required for endoplasmic reticulum motility and protein body formation. May function by binding with its tail domain to receptor proteins on membranes and exerting force with its N-terminal motor domain against actin filaments, thereby transporting its cargo along polarized actin cables. This Zea mays (Maize) protein is Protein OPAQUE1.